Consider the following 268-residue polypeptide: Tryptophan synthase alpha chain (268 aa).

Active-site proton acceptor residues include E49 and D60.

It belongs to the TrpA family. In terms of assembly, tetramer of two alpha and two beta chains.

It catalyses the reaction (1S,2R)-1-C-(indol-3-yl)glycerol 3-phosphate + L-serine = D-glyceraldehyde 3-phosphate + L-tryptophan + H2O. It participates in amino-acid biosynthesis; L-tryptophan biosynthesis; L-tryptophan from chorismate: step 5/5. Functionally, the alpha subunit is responsible for the aldol cleavage of indoleglycerol phosphate to indole and glyceraldehyde 3-phosphate. The protein is Tryptophan synthase alpha chain of Aeromonas salmonicida (strain A449).